A 193-amino-acid polypeptide reads, in one-letter code: Peptidyl-tRNA hydrolase (193 aa).

Tyr-17 lines the tRNA pocket. His-22 acts as the Proton acceptor in catalysis. The tRNA site is built by Tyr-69, Asn-71, and Asn-117.

Belongs to the PTH family. Monomer.

The protein localises to the cytoplasm. It catalyses the reaction an N-acyl-L-alpha-aminoacyl-tRNA + H2O = an N-acyl-L-amino acid + a tRNA + H(+). Hydrolyzes ribosome-free peptidyl-tRNAs (with 1 or more amino acids incorporated), which drop off the ribosome during protein synthesis, or as a result of ribosome stalling. Its function is as follows. Catalyzes the release of premature peptidyl moieties from peptidyl-tRNA molecules trapped in stalled 50S ribosomal subunits, and thus maintains levels of free tRNAs and 50S ribosomes. The chain is Peptidyl-tRNA hydrolase from Leifsonia xyli subsp. xyli (strain CTCB07).